Here is a 509-residue protein sequence, read N- to C-terminus: MTSSPELARAVAATLARHVTDVVICPGSRNSPLSLELIARDDIRVHTRIDERSAAFLALGLARSSKRHVAVVTTSGTAVANCAPAMIEAAYSHTPLIMVSADRPERLHGTGANQTIEQRGIFNVVDTDHVVDITDLNSISFARNVIHINVALDVPLVDVLPEVGDPVERVREVIEVDHGEVVLNLNERILVVAGDEAWEVPGLEDVPTIAEPSAPAPYHPVHPLAAQIFAHKEIKPEHIVVVGHPTLHRAVLSLLADVPVTVLTKTDTITGNPQAVGSRVKVTGELDKRWLQICEDASTLCADRVKEVLEGHGFTGLHVAAAVADTMAVGDTLFLGASNPVRDASLVGMPLGGVDIFAARGAAGIDGTVSQAVGVALDVQHRDATAIRADRTVALMGDVTFLHDVGGLLGARPENLTIVVANDDGCGIFETLEIGAPEFRPSFEQAFGTPHGVHIEAIAQAYGVNYLRAETLPELIEALIDTTDSAGFNIIEAVTTRSTRRDIDKALTL.

Belongs to the TPP enzyme family. MenD subfamily. In terms of assembly, homodimer. Mg(2+) is required as a cofactor. Mn(2+) serves as cofactor. The cofactor is thiamine diphosphate.

It carries out the reaction isochorismate + 2-oxoglutarate + H(+) = 5-enolpyruvoyl-6-hydroxy-2-succinyl-cyclohex-3-ene-1-carboxylate + CO2. Its pathway is quinol/quinone metabolism; 1,4-dihydroxy-2-naphthoate biosynthesis; 1,4-dihydroxy-2-naphthoate from chorismate: step 2/7. It participates in quinol/quinone metabolism; menaquinone biosynthesis. Its function is as follows. Catalyzes the thiamine diphosphate-dependent decarboxylation of 2-oxoglutarate and the subsequent addition of the resulting succinic semialdehyde-thiamine pyrophosphate anion to isochorismate to yield 2-succinyl-5-enolpyruvyl-6-hydroxy-3-cyclohexene-1-carboxylate (SEPHCHC). The polypeptide is 2-succinyl-5-enolpyruvyl-6-hydroxy-3-cyclohexene-1-carboxylate synthase (Corynebacterium diphtheriae (strain ATCC 700971 / NCTC 13129 / Biotype gravis)).